Here is a 615-residue protein sequence, read N- to C-terminus: Chaperone protein DnaK (615 aa).

Residue Thr-195 is modified to Phosphothreonine; by autocatalysis. The segment at 592 to 615 (EKGAQAASGKGPDDVIDADYKPAD) is disordered.

It belongs to the heat shock protein 70 family. As to quaternary structure, forms a heterononamer with DnaJ and DafA in the resting state. Three copies of each protein are present in the complex.

Functionally, cooperates with DnaJ, GrpE and ClpB to reactivate heat-inactivated proteins. The polypeptide is Chaperone protein DnaK (dnaK) (Thermus thermophilus (strain ATCC 27634 / DSM 579 / HB8)).